A 338-amino-acid chain; its full sequence is 3-keto-steroid reductase erg27 (338 aa).

NADP(+) contacts are provided by L16, T44, K50, and D75. Active-site proton donor residues include S180 and Y203. NADP(+)-binding residues include Y203, K207, and T236. K207 functions as the Lowers pKa of active site Tyr in the catalytic mechanism.

It belongs to the short-chain dehydrogenases/reductases (SDR) family. ERG27 subfamily. In terms of assembly, heterotetramer of erg25, erg26, erg27 and erg28. Erg28 acts as a scaffold to tether erg27 and other 4,4-demethylation-related enzymes, forming a demethylation enzyme complex, in the endoplasmic reticulum.

The catalysed reaction is 3-dehydro-4alpha-methylzymosterol + NADPH + H(+) = 4alpha-methylzymosterol + NADP(+). The protein operates within steroid biosynthesis; zymosterol biosynthesis; zymosterol from lanosterol: step 5/6. It functions in the pathway steroid metabolism; ergosterol biosynthesis. In terms of biological role, 3-keto-steroid reductase; part of the third module of ergosterol biosynthesis pathway that includes by the late steps of the pathway. Erg27 is a catalytic component of the C-4 demethylation complex that catalyze the reduction of the keto group on the C-3. The third module or late pathway involves the ergosterol synthesis itself through consecutive reactions that mainly occur in the endoplasmic reticulum (ER) membrane. Firstly, the squalene synthase erg9 catalyzes the condensation of 2 farnesyl pyrophosphate moieties to form squalene, which is the precursor of all steroids. Secondly, squalene is converted into lanosterol by the consecutive action of the squalene epoxidase erg1 and the lanosterol synthase erg7. The lanosterol 14-alpha-demethylase erg11/cyp1 catalyzes C14-demethylation of lanosterol to produce 4,4'-dimethyl cholesta-8,14,24-triene-3-beta-ol. In the next steps, a complex process involving various demethylation, reduction and desaturation reactions catalyzed by the C-14 reductase erg24 and the C-4 demethylation complex erg25-erg26-erg27 leads to the production of zymosterol. Erg28 likely functions in the C-4 demethylation complex reaction by tethering erg26 and Erg27 to the endoplasmic reticulum or to facilitate interaction between these proteins. Then, the sterol 24-C-methyltransferase erg6 catalyzes the methyl transfer from S-adenosyl-methionine to the C-24 of zymosterol to form fecosterol. The C-8 sterol isomerase erg2 catalyzes the reaction which results in unsaturation at C-7 in the B ring of sterols and thus converts fecosterol to episterol. The sterol-C5-desaturases erg31 and erg32 then catalyze the introduction of a C-5 double bond in the B ring to produce 5-dehydroepisterol. The C-22 sterol desaturase erg5 further converts 5-dehydroepisterol into ergosta-5,7,22,24(28)-tetraen-3beta-ol by forming the C-22(23) double bond in the sterol side chain. Finally, ergosta-5,7,22,24(28)-tetraen-3beta-ol is substrate of the C-24(28) sterol reductase erg4 to produce ergosterol. In the genus Schizosaccharomyces, a second route exists between lanosterol and fecosterol, via the methylation of lanosterol to eburicol by erg6, followed by C14-demethylation by erg11/cyp1 and C4-demethylation by the demethylation complex erg25-erg26-erg27. The protein is 3-keto-steroid reductase erg27 of Schizosaccharomyces pombe (strain 972 / ATCC 24843) (Fission yeast).